The following is a 404-amino-acid chain: Trigger factor (404 aa).

Residues 160–225 (KDHLFVRTEE…VLEVKTLKLP (66 aa)) enclose the PPIase FKBP-type domain.

The protein belongs to the FKBP-type PPIase family. Tig subfamily.

It localises to the cytoplasm. The catalysed reaction is [protein]-peptidylproline (omega=180) = [protein]-peptidylproline (omega=0). Involved in protein export. Acts as a chaperone by maintaining the newly synthesized protein in an open conformation. Functions as a peptidyl-prolyl cis-trans isomerase. This Thermus thermophilus (strain ATCC BAA-163 / DSM 7039 / HB27) protein is Trigger factor.